The primary structure comprises 336 residues: Quinolinate synthase (336 aa).

2 residues coordinate iminosuccinate: histidine 25 and serine 42. Cysteine 86 lines the [4Fe-4S] cluster pocket. Iminosuccinate is bound by residues 117 to 119 (YIN) and serine 138. Position 198 (cysteine 198) interacts with [4Fe-4S] cluster. Iminosuccinate is bound by residues 224–226 (HPE) and threonine 241. A [4Fe-4S] cluster-binding site is contributed by cysteine 288.

Belongs to the quinolinate synthase family. Type 3 subfamily. [4Fe-4S] cluster is required as a cofactor.

It is found in the cytoplasm. The enzyme catalyses iminosuccinate + dihydroxyacetone phosphate = quinolinate + phosphate + 2 H2O + H(+). Its pathway is cofactor biosynthesis; NAD(+) biosynthesis; quinolinate from iminoaspartate: step 1/1. Catalyzes the condensation of iminoaspartate with dihydroxyacetone phosphate to form quinolinate. This Helicobacter pylori (strain ATCC 700392 / 26695) (Campylobacter pylori) protein is Quinolinate synthase.